The following is a 437-amino-acid chain: Bystin (437 aa).

The interval 1–105 (MPKFKAARGV…DGSDDEDEEW (105 aa)) is disordered. Residue R40 is modified to Omega-N-methylarginine. S55 is subject to Phosphoserine. Residues 71–87 (AEHGTGDKPAAPRERTT) are compositionally biased toward basic and acidic residues. Residue S98 is modified to Phosphoserine. Phosphothreonine is present on T156. 2 positions are modified to phosphoserine: S167 and S414.

The protein belongs to the bystin family. As to quaternary structure, binds trophinin, tastin and cytokeratins. Found in the placenta from the sixth week of pregnancy. Was localized in the cytoplasm of the syncytiotrophoblast in the chorionic villi and in endometrial decidual cells at the uteroplacental interface. After week 10, the level decreased and then disappeared from placental villi.

The protein resides in the cytoplasm. Its subcellular location is the nucleus. The protein localises to the nucleolus. Required for processing of 20S pre-rRNA precursor and biogenesis of 40S ribosomal subunits. May be required for trophinin-dependent regulation of cell adhesion during implantation of human embryos. The chain is Bystin from Homo sapiens (Human).